We begin with the raw amino-acid sequence, 196 residues long: Mpv17-like protein (196 aa).

Residues 1–16 lie on the Cytoplasmic side of the membrane; it reads MVSWWQALTRAAGRYP. Residues 16 to 55 form a targeting to peroxisomes region; the sequence is PWPANVLLYAGFFSGGDALQQVLRGGPADWQHTRHVATVA. Residues 17-34 form a helical membrane-spanning segment; that stretch reads WPANVLLYAGFFSGGDAL. Residues 35–50 are Lumenal-facing; the sequence is QQVLRGGPADWQHTRH. The helical transmembrane segment at 51–67 threads the bilayer; the sequence is VATVAVAFHANLNYVWL. Residues 68 to 90 are Cytoplasmic-facing; the sequence is NLLERALPGRAPRTILAKVLCDQ. Residues 91 to 108 form a helical membrane-spanning segment; the sequence is ALGGPVYVSTFYAGMSIL. Topologically, residues 109-150 are lumenal; the sequence is QGKDDIFLDMRQKFWNTYKSGLMYWPFVQLINFSLIPIRWRT. Residues 151-167 form a helical membrane-spanning segment; sequence AYTGLCGFLWATFLCFS. Residues 168–196 are Cytoplasmic-facing; it reads QQEGDGTFKSAFTFRRIKVTNEVEKPSEK.

Belongs to the peroxisomal membrane protein PXMP2/4 family.

The protein resides in the peroxisome membrane. Functionally, participates in reactive oxygen species metabolism by up- or down-regulation of the genes of antioxidant enzymes. Protective against the mitochondrial apoptotic cascade. The protein is Mpv17-like protein (MPV17L) of Bos taurus (Bovine).